The chain runs to 61 residues: Bactridin-1 (61 aa).

An LCN-type CS-alpha/beta domain is found at 1–61 (KDGYIIEHRG…KIFDSNNLKC (61 aa)). 4 disulfides stabilise this stretch: Cys11-Cys61, Cys15-Cys37, Cys23-Cys42, and Cys27-Cys44.

The protein belongs to the long (4 C-C) scorpion toxin superfamily. Sodium channel inhibitor family. Beta subfamily. As to expression, expressed by the venom gland.

The protein resides in the secreted. Functionally, shows antibacterial activity against both Gram-positive bacteria (B.subtilis, M.luteus, E.faecalis) and Gram-negative bacteria (P.aeruginosa, Y.enterocolitica, A.calcoaceticus). Modifies membrane sodium permeability on Y.enterocolitica. Is toxic to cockroaches and crabs, but is not toxic to mice. Does not induce haemolysis in human erythrocytes. Acts by inhibiting the sodium (Nav) currents. The sequence is that of Bactridin-1 from Tityus discrepans (Venezuelan scorpion).